Here is an 834-residue protein sequence, read N- to C-terminus: Structure-specific endonuclease subunit SLX4 (834 aa).

Disordered regions lie at residues 80–105 (RVPRNNPVTGPSKEHKQRTRSPKTTT), 272–307 (TVPAIPTPTESSTTEDVQGSSSKQQRVKAKKPQKGK), 332–372 (QNVA…GRPV), 401–421 (GYPEYPCDETQDTQNSPSNSA), 603–649 (ESKP…AKAL), and 720–740 (ATPNARRSRQGSSSASFSIEP). Residues 279 to 295 (PTESSTTEDVQGSSSKQ) are compositionally biased toward polar residues. The span at 296 to 305 (QRVKAKKPQK) shows a compositional bias: basic residues. Polar residues-rich tracts occupy residues 345–366 (SNRPSGTKHSNSGRGKSSTLKN) and 412–421 (DTQNSPSNSA). A compositionally biased stretch (basic and acidic residues) spans 611–630 (DDARKNGFRKENHSDVRVRP). Positions 729–740 (QGSSSASFSIEP) are enriched in low complexity.

It belongs to the SLX4 family. As to quaternary structure, forms a heterodimer with SLX1. In terms of processing, phosphorylated in response to DNA damage.

It localises to the nucleus. In terms of biological role, regulatory subunit of the SLX1-SLX4 structure-specific endonuclease that resolves DNA secondary structures generated during DNA repair and recombination. Has endonuclease activity towards branched DNA substrates, introducing single-strand cuts in duplex DNA close to junctions with ss-DNA. The polypeptide is Structure-specific endonuclease subunit SLX4 (Ajellomyces capsulatus (strain NAm1 / WU24) (Darling's disease fungus)).